A 245-amino-acid polypeptide reads, in one-letter code: tRNA pseudouridine synthase A (245 aa).

Catalysis depends on aspartate 52, which acts as the Nucleophile. Position 111 (tyrosine 111) interacts with substrate.

This sequence belongs to the tRNA pseudouridine synthase TruA family. Homodimer.

The enzyme catalyses uridine(38/39/40) in tRNA = pseudouridine(38/39/40) in tRNA. Its function is as follows. Formation of pseudouridine at positions 38, 39 and 40 in the anticodon stem and loop of transfer RNAs. In Rickettsia bellii (strain RML369-C), this protein is tRNA pseudouridine synthase A.